We begin with the raw amino-acid sequence, 224 residues long: Large ribosomal subunit protein uL16z (224 aa).

The protein belongs to the universal ribosomal protein uL16 family. As to quaternary structure, component of the small ribosomal subunit. Mature ribosomes consist of a small (40S) and a large (60S) subunit. The 40S subunit contains about 33 different proteins and 1 molecule of RNA (18S). The 60S subunit contains about 49 different proteins and 3 molecules of RNA (25S, 5.8S and 5S).

The chain is Large ribosomal subunit protein uL16z (SC34) from Oryza sativa subsp. indica (Rice).